A 635-amino-acid polypeptide reads, in one-letter code: Threonine--tRNA ligase (635 aa).

The region spanning 1 to 61 (MIKITLKDGK…HKDSSLEILT (61 aa)) is the TGS domain. Residues 242 to 532 (DHRKLGKELD…LIEQYAGAFP (291 aa)) are catalytic. 3 residues coordinate Zn(2+): Cys333, His384, and His509.

This sequence belongs to the class-II aminoacyl-tRNA synthetase family. Homodimer. Zn(2+) serves as cofactor.

The protein resides in the cytoplasm. It carries out the reaction tRNA(Thr) + L-threonine + ATP = L-threonyl-tRNA(Thr) + AMP + diphosphate + H(+). Catalyzes the attachment of threonine to tRNA(Thr) in a two-step reaction: L-threonine is first activated by ATP to form Thr-AMP and then transferred to the acceptor end of tRNA(Thr). Also edits incorrectly charged L-seryl-tRNA(Thr). This is Threonine--tRNA ligase from Clostridium botulinum (strain 657 / Type Ba4).